The primary structure comprises 183 residues: Anterior gradient protein 1 (183 aa).

Positions 1 to 18 (MQAGLSLVCLVLLCSALG) are cleaved as a signal peptide.

Belongs to the AGR family. As to expression, from stage 18 (neurula) onward, expressed in the cement gland until it degenerates. More weakly expressed in the adjacent hatching gland.

It is found in the secreted. Its function is as follows. Does not appear to be required for cement gland formation. This Xenopus laevis (African clawed frog) protein is Anterior gradient protein 1 (ag1).